Consider the following 601-residue polypeptide: Leucine zipper putative tumor suppressor 1 (601 aa).

G2 is lipidated: N-myristoyl glycine. Residues 135–190 form a disordered region; that stretch reads GAILHSSPESTNHQLHPMPPDKPKEQELKPGLCSGALSDSGRNSMSSLPTHSTTSS. A compositionally biased stretch (basic and acidic residues) spans 153–162; the sequence is PPDKPKEQEL. Residues 174 to 190 are compositionally biased toward polar residues; that stretch reads SGRNSMSSLPTHSTTSS. Residues 255-573 adopt a coiled-coil conformation; the sequence is PLSTDECTIQ…RLEKALQQLA (319 aa).

Belongs to the LZTS family. In terms of assembly, binds EEF1G, TLK2 and CDK1. Post-translationally, phosphorylated on serine residues. Hyperphosphorylated by the cAMP-dependent kinase PKA during cell-cycle progression. Highly expressed in brain, in particular in cortex, the CA2 region of the hippocampus, olfactory bulb, striatum and pons. Not detectable in the other tissues tested.

It localises to the cytoplasm. The protein localises to the cell membrane. Its subcellular location is the cell projection. It is found in the dendritic spine. The protein resides in the postsynaptic density. It localises to the synapse. In terms of biological role, involved in the regulation of cell growth. May stabilize the active CDC2-cyclin B1 complex and thereby contribute to the regulation of the cell cycle and the prevention of uncontrolled cell proliferation. May act as tumor suppressor. In Rattus norvegicus (Rat), this protein is Leucine zipper putative tumor suppressor 1 (Lzts1).